The primary structure comprises 59 residues: MNMYWFLGALLYFLIGTYIFIRVTRDSQSGSWILLALAAPLIIAGYPYFYSKKLLSKRR.

Helical transmembrane passes span 1-21 (MNMY…YIFI) and 30-50 (GSWI…PYFY).

Its subcellular location is the cell membrane. This is an uncharacterized protein from Bacillus subtilis (strain 168).